Consider the following 300-residue polypeptide: Probable L-serine dehydratase, alpha chain (300 aa).

It belongs to the iron-sulfur dependent L-serine dehydratase family. As to quaternary structure, heterodimer of an alpha chain and a beta chain. Requires [4Fe-4S] cluster as cofactor.

The catalysed reaction is L-serine = pyruvate + NH4(+). The protein operates within carbohydrate biosynthesis; gluconeogenesis. This chain is Probable L-serine dehydratase, alpha chain (sdaAA), found in Bacillus subtilis (strain 168).